The chain runs to 239 residues: tRNA (guanine-N(7)-)-methyltransferase (239 aa).

S-adenosyl-L-methionine contacts are provided by Glu-69, Glu-94, Asp-121, and Asp-144. The active site involves Asp-144. Lys-148 contacts substrate. Residues 150–155 are interaction with RNA; it reads RHNKRR. Residues Asp-180 and 217–220 each bind substrate; that span reads TKFE.

This sequence belongs to the class I-like SAM-binding methyltransferase superfamily. TrmB family. As to quaternary structure, monomer.

The enzyme catalyses guanosine(46) in tRNA + S-adenosyl-L-methionine = N(7)-methylguanosine(46) in tRNA + S-adenosyl-L-homocysteine. The protein operates within tRNA modification; N(7)-methylguanine-tRNA biosynthesis. In terms of biological role, catalyzes the formation of N(7)-methylguanine at position 46 (m7G46) in tRNA. This is tRNA (guanine-N(7)-)-methyltransferase from Salmonella choleraesuis (strain SC-B67).